The sequence spans 508 residues: Glycerol kinase (508 aa).

An ADP-binding site is contributed by Thr17. Residues Thr17, Thr18, and Ser19 each contribute to the ATP site. Thr17 lines the sn-glycerol 3-phosphate pocket. Arg21 contributes to the ADP binding site. 4 residues coordinate sn-glycerol 3-phosphate: Arg87, Glu88, Tyr139, and Asp256. The glycerol site is built by Arg87, Glu88, Tyr139, Asp256, and Gln257. The ADP site is built by Thr278 and Gly322. ATP-binding residues include Thr278, Gly322, Gln326, and Ala423. ADP is bound by residues Ala423 and Asn427.

This sequence belongs to the FGGY kinase family.

It catalyses the reaction glycerol + ATP = sn-glycerol 3-phosphate + ADP + H(+). Its pathway is polyol metabolism; glycerol degradation via glycerol kinase pathway; sn-glycerol 3-phosphate from glycerol: step 1/1. Inhibited by fructose 1,6-bisphosphate (FBP). Functionally, key enzyme in the regulation of glycerol uptake and metabolism. Catalyzes the phosphorylation of glycerol to yield sn-glycerol 3-phosphate. This is Glycerol kinase from Corynebacterium efficiens (strain DSM 44549 / YS-314 / AJ 12310 / JCM 11189 / NBRC 100395).